Consider the following 93-residue polypeptide: Alpha-defensin 3 (93 aa).

An N-terminal signal peptide occupies residues 1-16 (MKTLVLLSALVLLAFQ). Positions 17 to 58 (VQADPIQNTDEETKTEEQPGEDDQAVSVSFGDPEGSSLQEES) are excised as a propeptide. The interval 22–56 (IQNTDEETKTEEQPGEDDQAVSVSFGDPEGSSLQE) is disordered. Intrachain disulfides connect cysteine 64–cysteine 92, cysteine 66–cysteine 81, and cysteine 71–cysteine 91.

It belongs to the alpha-defensin family. As to expression, paneth cells of the small bowel.

Its subcellular location is the secreted. Its function is as follows. Probably contributes to the antimicrobial barrier function of the small bowel mucosa. The polypeptide is Alpha-defensin 3 (Defa3) (Mus musculus (Mouse)).